Reading from the N-terminus, the 398-residue chain is 8-amino-7-oxononanoate synthase (398 aa).

Position 26 (R26) interacts with substrate. 113–114 contacts pyridoxal 5'-phosphate; it reads GF. Residue H138 participates in substrate binding. 3 residues coordinate pyridoxal 5'-phosphate: S181, H209, and T238. K241 is modified (N6-(pyridoxal phosphate)lysine). T355 provides a ligand contact to substrate.

The protein belongs to the class-II pyridoxal-phosphate-dependent aminotransferase family. BioF subfamily. In terms of assembly, homodimer. Requires pyridoxal 5'-phosphate as cofactor.

The enzyme catalyses 6-carboxyhexanoyl-[ACP] + L-alanine + H(+) = (8S)-8-amino-7-oxononanoate + holo-[ACP] + CO2. Its pathway is cofactor biosynthesis; biotin biosynthesis. Catalyzes the decarboxylative condensation of pimeloyl-[acyl-carrier protein] and L-alanine to produce 8-amino-7-oxononanoate (AON), [acyl-carrier protein], and carbon dioxide. In Aeromonas hydrophila subsp. hydrophila (strain ATCC 7966 / DSM 30187 / BCRC 13018 / CCUG 14551 / JCM 1027 / KCTC 2358 / NCIMB 9240 / NCTC 8049), this protein is 8-amino-7-oxononanoate synthase.